A 557-amino-acid chain; its full sequence is 2-succinyl-5-enolpyruvyl-6-hydroxy-3-cyclohexene-1-carboxylate synthase (557 aa).

Belongs to the TPP enzyme family. MenD subfamily. In terms of assembly, homodimer. The cofactor is Mg(2+). Mn(2+) is required as a cofactor. Thiamine diphosphate serves as cofactor.

The catalysed reaction is isochorismate + 2-oxoglutarate + H(+) = 5-enolpyruvoyl-6-hydroxy-2-succinyl-cyclohex-3-ene-1-carboxylate + CO2. Its pathway is quinol/quinone metabolism; 1,4-dihydroxy-2-naphthoate biosynthesis; 1,4-dihydroxy-2-naphthoate from chorismate: step 2/7. It participates in quinol/quinone metabolism; menaquinone biosynthesis. Its function is as follows. Catalyzes the thiamine diphosphate-dependent decarboxylation of 2-oxoglutarate and the subsequent addition of the resulting succinic semialdehyde-thiamine pyrophosphate anion to isochorismate to yield 2-succinyl-5-enolpyruvyl-6-hydroxy-3-cyclohexene-1-carboxylate (SEPHCHC). This chain is 2-succinyl-5-enolpyruvyl-6-hydroxy-3-cyclohexene-1-carboxylate synthase, found in Staphylococcus aureus (strain USA300).